A 97-amino-acid chain; its full sequence is Putative defensin-like protein 237 (97 aa).

Residues 1–23 (MRHATSPIVFCFLIFLVMNHVKG) form the signal peptide. 4 cysteine pairs are disulfide-bonded: cysteine 30/cysteine 94, cysteine 40/cysteine 71, cysteine 48/cysteine 84, and cysteine 69/cysteine 86.

Belongs to the DEFL family.

It localises to the secreted. This chain is Putative defensin-like protein 237 (SCRL21), found in Arabidopsis thaliana (Mouse-ear cress).